The chain runs to 1525 residues: MGIESLCSADASEPFWDWNLTWHTENPDFTQCFQNTVLVWVPCIYLWVCFPAYFLYLRSHDRGYIQMSILNKAKTALGLILWIVCWADLFYSFWERSQNIFRAPFFLISPTVLGITMLLATFLIQHERLKGVQSSGVMMIFWLISLLCATVIFRSKIMLALNTDTEVDAFRYVTFCTYFILLLVQLILSCFPEKPPLFSEAVNDPKPCPEFSASFLSRITFWWITGLMIQGHRRPLEAKDLWSLNKEDTSEEIVPGLAKNWAKEWAKTKRQPLNMLYSSKKQQKSSDSNGEVMEEAEALIIKPSQRSSEASLSKVLYKTFGPYFLMSFLFKAAHDLLMFTGPEILKLLINFVNNKSAPNWQGYFYTGLLFVCACLQTLILHQYFHICFVTGMRLKTAIVGVIYRKALVITNSARKTSTVGEIVNLMSVDAQRFMDLATYINMIWSAPLQVILALYLLWRNLGPSVLAGVAVMILLVPINAVMAMKTKTYQVAQMKSKDNRIKLMNEILNGIKVLKLYAWELAFREKVLEIRQKELKVLKKSAYLAAMGTFTWVCAPFLVALSTFAVYVKVNKNNILDAQKAFVSLALFNILRFPLNILPMVISSIVEASVSLKRLRVFLSHEELDPDSIIRGPITNAEGSIVVKNATFSWSKTDPPSLNSINFTVPEGSLIAVVGQVGCGKSSLLSALLGEMDKKEGYVVVKGSIAYVPQQAWIQNATLEDNIIFGREMNESRYKRVIEACALLPDLEILPMGDRTEIGEKGVNLSGGQKQRVSLARAVYCNADTYLFDDPLSAVDAHVGKHIFEKVIGPKGILKNKTRVLVTHAVNYLPQMDTILVMTDGEISEMGSYQELLKQDGAFAEFLRTYANAEQSMESSDASSPSGKEGKPVENGVLVNDATGKLMHRQLSNSSTYSRETGKSQHQSSTAELQKPLAEKNSWKLTEADTAKTGRVKATVYWEYMKAIGLYISFLSVFLFMCNHIASLASNYWLSLWTDDPVVNGTQQYTNVRLGVYGALGISQGIAVFGYSMAVSIGGIFASRHLHLDLLHNVLRSPMSFFERTPSGNLVSRFSKEIDTIDSTIPPIIKMFMGSTFNVIGACIIILLATPIAAVVIPPLGLVYLLVQRFYVATSRQLKRLESVSRSPVYSHFNETLLGVSVIRAFEEQKRFIKQNDMKVDENQKAYYPSIVANRWLAVRLEFVGNCIVLFAALFAVIARNKLSPGLIGLSVSYSLQITAYLNWLVRMTSDLETNIVAVERVKEYAEMEKEAEWSIEETAPASTWPQEGKVEFRGFGLRYREDLDLVLKNINITINGGEKVGIVGRTGAGKSSLTLGLFRINEAAEGEIIIDGINIAKIGLHDLRFKITIIPQDPILFSGSLRMNLDPFDQHSDEDIWRSLELAHLKNFVSSLPDKLNHECSEGGENLSVGQRQLVCLARALLRKSKILVLDEATAAVDLETDNLIQSTIKSQFEECTVLTIAHRLNTIMDYTRVLVLDRGEVVECDSPDNLLQAKGLFYSMAKDSGLA.

Residues Met1 to Phe33 lie on the Extracellular side of the membrane. A helical membrane pass occupies residues Gln34–Phe54. At Leu55–Lys74 the chain is on the cytoplasmic side. A helical membrane pass occupies residues Thr75–Glu95. Residues Arg96–Ile100 lie on the Extracellular side of the membrane. The chain crosses the membrane as a helical span at residues Phe101–Thr121. Residues Phe122 to Gln133 lie on the Cytoplasmic side of the membrane. A helical membrane pass occupies residues Ser134–Arg154. The Extracellular segment spans residues Ser155 to Tyr172. Residues Val173–Glu193 form a helical membrane-spanning segment. The Cytoplasmic segment spans residues Lys194–Val315. Residues Leu316 to Leu336 form a helical membrane-spanning segment. An ABC transmembrane type-1 1 domain is found at Phe324–Glu607. At Leu337–Gly362 the chain is on the extracellular side. The chain crosses the membrane as a helical span at residues Tyr363–Tyr383. At Phe384 to Tyr439 the chain is on the cytoplasmic side. Residues Ile440–Asn460 form a helical membrane-spanning segment. Over Leu461–Pro463 the chain is Extracellular. A helical transmembrane segment spans residues Ser464–Met484. Residues Lys485–Ala546 are Cytoplasmic-facing. Residues Met547–Tyr567 traverse the membrane as a helical segment. At Val568–Asn589 the chain is on the extracellular side. A helical membrane pass occupies residues Ile590 to Val610. The Cytoplasmic segment spans residues Ser611 to Met961. In terms of domain architecture, ABC transporter 1 spans Ile641–Thr865. Gly675–Ser682 is an ATP binding site. Composition is skewed to polar residues over residues Gln871–Ser882 and Ser908–Glu928. Disordered stretches follow at residues Gln871–Asn891 and Ser908–Gln930. The chain crosses the membrane as a helical span at residues Lys962 to Ala982. One can recognise an ABC transmembrane type-1 2 domain in the interval Ser969–Thr1250. Residues Ser983–Ser1019 lie on the Extracellular side of the membrane. Residues Gln1020–Arg1040 form a helical membrane-spanning segment. Over His1041 to Pro1083 the chain is Cytoplasmic. Residues Ile1084 to Leu1104 form a helical membrane-spanning segment. Ala1105 is a topological domain (extracellular). The chain crosses the membrane as a helical span at residues Thr1106–Phe1126. At Tyr1127–Leu1197 the chain is on the cytoplasmic side. A helical transmembrane segment spans residues Glu1198–Lys1218. Residues Leu1219–Ser1220 are Extracellular-facing. A helical membrane pass occupies residues Pro1221 to Leu1241. Residues Val1242–Ala1525 are Cytoplasmic-facing. Positions Phe1289–Asp1521 constitute an ABC transporter 2 domain. Gly1321 to Ser1328 is a binding site for ATP.

The protein belongs to the ABC transporter superfamily. ABCC family. Conjugate transporter (TC 3.A.1.208) subfamily.

The protein resides in the cell membrane. The enzyme catalyses ATP + H2O + xenobioticSide 1 = ADP + phosphate + xenobioticSide 2.. It catalyses the reaction an S-substituted glutathione(in) + ATP + H2O = an S-substituted glutathione(out) + ADP + phosphate + H(+). The catalysed reaction is sphing-4-enine 1-phosphate(in) + ATP + H2O = sphing-4-enine 1-phosphate(out) + ADP + phosphate + H(+). It carries out the reaction leukotriene C4(in) + ATP + H2O = leukotriene C4(out) + ADP + phosphate + H(+). The enzyme catalyses 17beta-estradiol 17-O-(beta-D-glucuronate)(in) + ATP + H2O = 17beta-estradiol 17-O-(beta-D-glucuronate)(out) + ADP + phosphate + H(+). It catalyses the reaction 2',3'-cGAMP(in) + ATP + H2O = 2',3'-cGAMP(out) + ADP + phosphate + H(+). Its function is as follows. Mediates export of organic anions and drugs from the cytoplasm. Mediates ATP-dependent transport of glutathione and glutathione conjugates, leukotriene C4, estradiol-17-beta-o-glucuronide and other xenobiotics. Hydrolyzes ATP with low efficiency. Mediates ATP-dependent, GSH-independent cyclic GMP-AMP (cGAMP) export. Thus, by limiting intracellular cGAMP concentrations negatively regulates the cGAS-STING pathway. The chain is Multidrug resistance-associated protein 1 from Gallus gallus (Chicken).